The following is a 278-amino-acid chain: NAD kinase (278 aa).

D56 functions as the Proton acceptor in the catalytic mechanism. NAD(+) contacts are provided by residues 56-57 (DG), 132-133 (NE), R158, D160, and 171-176 (TAYNKS).

This sequence belongs to the NAD kinase family. Requires a divalent metal cation as cofactor.

It localises to the cytoplasm. It catalyses the reaction NAD(+) + ATP = ADP + NADP(+) + H(+). Involved in the regulation of the intracellular balance of NAD and NADP, and is a key enzyme in the biosynthesis of NADP. Catalyzes specifically the phosphorylation on 2'-hydroxyl of the adenosine moiety of NAD to yield NADP. The protein is NAD kinase of Streptococcus pyogenes serotype M1.